We begin with the raw amino-acid sequence, 383 residues long: Meiotically up-regulated gene 93 protein (383 aa).

Residues 75-108 (KKVIWRRGLAYLRLGHPHLANRDWEHSLELDPNN) form a TPR repeat.

It localises to the cytoplasm. The protein localises to the nucleus. Has a role in meiosis. This chain is Meiotically up-regulated gene 93 protein (mug93), found in Schizosaccharomyces pombe (strain 972 / ATCC 24843) (Fission yeast).